A 211-amino-acid chain; its full sequence is 3-demethoxyubiquinol 3-hydroxylase (211 aa).

6 residues coordinate Fe cation: glutamate 60, glutamate 90, histidine 93, glutamate 142, glutamate 174, and histidine 177.

Belongs to the COQ7 family. Fe cation serves as cofactor.

The protein resides in the cell membrane. The catalysed reaction is a 5-methoxy-2-methyl-3-(all-trans-polyprenyl)benzene-1,4-diol + AH2 + O2 = a 3-demethylubiquinol + A + H2O. It participates in cofactor biosynthesis; ubiquinone biosynthesis. Catalyzes the hydroxylation of 2-nonaprenyl-3-methyl-6-methoxy-1,4-benzoquinol during ubiquinone biosynthesis. In Herminiimonas arsenicoxydans, this protein is 3-demethoxyubiquinol 3-hydroxylase.